A 309-amino-acid chain; its full sequence is Ribokinase (309 aa).

Substrate is bound by residues 14-16 (NAD), 42-46 (GKGAN), and Glu143. ATP contacts are provided by residues Asn187 and 223-228 (TLGSRG). K(+)-binding residues include Asp249 and Ile251. Residues 254–255 (GD) and His279 contribute to the ATP site. A substrate-binding site is contributed by Asp255. The Proton acceptor role is filled by Asp255. K(+) contacts are provided by Ala285, Arg288, Gly290, and Ser294.

The protein belongs to the carbohydrate kinase PfkB family. Ribokinase subfamily. Homodimer. It depends on Mg(2+) as a cofactor.

The protein resides in the cytoplasm. It catalyses the reaction D-ribose + ATP = D-ribose 5-phosphate + ADP + H(+). The protein operates within carbohydrate metabolism; D-ribose degradation; D-ribose 5-phosphate from beta-D-ribopyranose: step 2/2. With respect to regulation, activated by a monovalent cation that binds near, but not in, the active site. The most likely occupant of the site in vivo is potassium. Ion binding induces a conformational change that may alter substrate affinity. Functionally, catalyzes the phosphorylation of ribose at O-5 in a reaction requiring ATP and magnesium. The resulting D-ribose-5-phosphate can then be used either for sythesis of nucleotides, histidine, and tryptophan, or as a component of the pentose phosphate pathway. This is Ribokinase from Escherichia coli O157:H7.